Consider the following 300-residue polypeptide: ADP,ATP carrier protein 2 (300 aa).

Solcar repeat units lie at residues 8-100, 113-203, and 214-299; these read VAFI…YKQV, RYFI…ARGM, and VSWA…IKKV. The next 5 helical transmembrane spans lie at 10-39, 77-101, 112-132, 181-201, and 213-233; these read FIKD…LLLQ, LANV…KQVF, TRYF…SLCF, VSVQ…DTAR, and YVSW…SYPF. ADP-binding residues include Arg-82 and Lys-94. Arg-237 serves as a coordination point for ADP. The tract at residues 237–242 is important for transport activity; the sequence is RRRMMM. The Nucleotide carrier signature motif signature appears at 237–242; it reads RRRMMM. The chain crosses the membrane as a helical span at residues 276 to 293; that stretch reads AFSNVLRGTGGAFVLVLY.

Belongs to the mitochondrial carrier (TC 2.A.29) family. As to quaternary structure, monomer.

It localises to the mitochondrion inner membrane. The enzyme catalyses ADP(in) + ATP(out) = ADP(out) + ATP(in). Its activity is regulated as follows. The matrix-open state (m-state) is inhibited by the membrane-permeable bongkrekic acid (BKA). The cytoplasmic-open state (c-state) is inhibited by the membrane-impermeable toxic inhibitor carboxyatractyloside (CATR). Functionally, ADP:ATP antiporter that mediates import of ADP into the mitochondrial matrix for ATP synthesis, and export of ATP out to fuel the cell. Cycles between the cytoplasmic-open state (c-state) and the matrix-open state (m-state): operates by the alternating access mechanism with a single substrate-binding site intermittently exposed to either the cytosolic (c-state) or matrix (m-state) side of the inner mitochondrial membrane. In Anopheles gambiae (African malaria mosquito), this protein is ADP,ATP carrier protein 2.